The chain runs to 651 residues: Intraflagellar transport protein 70A (651 aa).

TPR repeat units lie at residues 8 to 41 (DGEYTATIYRLIKEARYGEAIQVLSNELQKQYRS), 42 to 75 (RAGLSLLGYCYYQIQDFVNAADCYEQLIQISPEV), 140 to 173 (PESEINMGCLLYKEGHYEEACKKFITAMQVMGYK), 175 to 207 (DLSFNIALCYYSMKQYAPALKHIADIIERGIRE), 372 to 405 (LTEQMRKLTKQVQEARHNRDDEAVKKAVNEYDET), 410 to 443 (IPVLMAQAKIYWNMENYQMVEKIFRKSVEFCNEH), and 445 to 478 (IWKLNVAHVLFMQDNKYKEAIGFYEPIVKKHYDN). Positions 494 to 521 (YIMTSQNEEAEELMRKIEKEEEQIAYEN) form a coiled coil. A TPR 8 repeat occupies 530 to 563 (CIVNLVIGTLYCAKGNYEFGISRVIKSLEPYNKK).

The protein belongs to the TTC30/dfy-1/fleer family.

Its subcellular location is the cell projection. It is found in the cilium. Its function is as follows. Required for polyglutamylation of axonemal tubulin. Plays a role in anterograde intraflagellar transport (IFT), the process by which cilia precursors are transported from the base of the cilium to the site of their incorporation at the tip. The protein is Intraflagellar transport protein 70A (ift70a) of Xenopus laevis (African clawed frog).